A 188-amino-acid polypeptide reads, in one-letter code: Protein GrpE (188 aa).

The segment at 1 to 24 (MSDENKPGEAAELDAGVAPEAQPE) is disordered.

This sequence belongs to the GrpE family. In terms of assembly, homodimer.

It is found in the cytoplasm. Its function is as follows. Participates actively in the response to hyperosmotic and heat shock by preventing the aggregation of stress-denatured proteins, in association with DnaK and GrpE. It is the nucleotide exchange factor for DnaK and may function as a thermosensor. Unfolded proteins bind initially to DnaJ; upon interaction with the DnaJ-bound protein, DnaK hydrolyzes its bound ATP, resulting in the formation of a stable complex. GrpE releases ADP from DnaK; ATP binding to DnaK triggers the release of the substrate protein, thus completing the reaction cycle. Several rounds of ATP-dependent interactions between DnaJ, DnaK and GrpE are required for fully efficient folding. The protein is Protein GrpE of Hyphomonas neptunium (strain ATCC 15444).